The primary structure comprises 236 residues: Thioredoxin-like 2-2, chloroplastic (236 aa).

Residues 1–82 constitute a chloroplast transit peptide; it reads MAGVVRLTTT…LRRPKSQVVR (82 aa). Positions 83 to 220 constitute a Thioredoxin domain; it reads VKVDENVAET…QLELGITLQT (138 aa). Active-site nucleophile residues include Cys135 and Cys138. A disulfide bridge connects residues Cys135 and Cys138.

This sequence belongs to the thioredoxin family.

It localises to the plastid. It is found in the chloroplast. In terms of biological role, thiol-disulfide oxidoreductase that may participate in various redox reactions. Possesses insulin disulfide bonds reducing activity. The sequence is that of Thioredoxin-like 2-2, chloroplastic from Arabidopsis thaliana (Mouse-ear cress).